The primary structure comprises 492 residues: Putative protein disulfide-isomerase C1F5.02 (492 aa).

An N-terminal signal peptide occupies residues Met-1–Ala-22. Residues Glu-23–Leu-128 enclose the Thioredoxin 1 domain. Active-site nucleophile residues include Cys-51 and Cys-54. An intrachain disulfide couples Cys-51 to Cys-54. N-linked (GlcNAc...) asparagine glycans are attached at residues Asn-161 and Asn-257. A Thioredoxin 2 domain is found at Glu-323–Ser-462. Catalysis depends on nucleophile residues Cys-385 and Cys-388. The cysteines at positions 385 and 388 are disulfide-linked. Positions Lys-468–Leu-492 are disordered. Acidic residues predominate over residues Asp-477–Leu-492. The Prevents secretion from ER signature appears at Ala-489–Leu-492.

Belongs to the protein disulfide isomerase family.

Its subcellular location is the endoplasmic reticulum lumen. It carries out the reaction Catalyzes the rearrangement of -S-S- bonds in proteins.. In terms of biological role, participates in the folding of proteins containing disulfide bonds, may be involved in glycosylation, prolyl hydroxylation and triglyceride transfer. The polypeptide is Putative protein disulfide-isomerase C1F5.02 (Schizosaccharomyces pombe (strain 972 / ATCC 24843) (Fission yeast)).